Consider the following 430-residue polypeptide: Serine carboxypeptidase-like 13 (430 aa).

Positions 1 to 22 (MSLTLEFLLLLIVLILSHHAHS) are cleaved as a signal peptide. Cystine bridges form between Cys81–Cys319, Cys240–Cys254, and Cys278–Cys285. An N-linked (GlcNAc...) asparagine glycan is attached at Asn102. Residue Ser177 is part of the active site. Asn299 and Asn323 each carry an N-linked (GlcNAc...) asparagine glycan. The active site involves Asp355. An N-linked (GlcNAc...) asparagine glycan is attached at Asn371. His408 is an active-site residue.

It belongs to the peptidase S10 family. In terms of tissue distribution, expression not detected.

It localises to the secreted. It carries out the reaction 2 1-O-(trans-sinapoyl)-beta-D-glucose = 1,2-di-O-sinapoyl beta-D-glucose + D-glucose. Catalyzes the formation of 1,2-bis-O-sinapoyl beta-D-glucoside. The polypeptide is Serine carboxypeptidase-like 13 (SCPL13) (Arabidopsis thaliana (Mouse-ear cress)).